A 193-amino-acid chain; its full sequence is uncharacterized protein (193 aa).

This is an uncharacterized protein from Acidianus convivator (ATV).